We begin with the raw amino-acid sequence, 76 residues long: MPVAPSNHCDNQCPHIFSKALVVSVAPSPPRDKPAPYTFTDVSSLCGLQKKCEGGKAMLFTLKRDRFSFLLFVSHC.

The chain is Ovarian cancer-related protein 1 (OCR1) from Homo sapiens (Human).